A 1188-amino-acid chain; its full sequence is DNA-directed RNA polymerase subunit beta (1188 aa).

It belongs to the RNA polymerase beta chain family. In terms of assembly, the RNAP catalytic core consists of 2 alpha, 1 beta, 1 beta' and 1 omega subunit. When a sigma factor is associated with the core the holoenzyme is formed, which can initiate transcription.

The enzyme catalyses RNA(n) + a ribonucleoside 5'-triphosphate = RNA(n+1) + diphosphate. Functionally, DNA-dependent RNA polymerase catalyzes the transcription of DNA into RNA using the four ribonucleoside triphosphates as substrates. The sequence is that of DNA-directed RNA polymerase subunit beta from Streptococcus equi subsp. zooepidemicus (strain H70).